Here is a 198-residue protein sequence, read N- to C-terminus: HTH-type transcriptional repressor DhaR (198 aa).

The 61-residue stretch at 4-64 folds into the HTH tetR-type domain; it reads TPVRQHLVEK…QVLQEFFSDL (61 aa).

Transcriptional repressor for the dhaA haloalkane dehalogenase gene. The chain is HTH-type transcriptional repressor DhaR (dhaR) from Mycobacterium sp. (strain GP1).